We begin with the raw amino-acid sequence, 729 residues long: MLYKGDTLYLDWLEDGIAELVFDAPGSVNKLDTATVASLGQALDVLEKQTDLKGLLLRSNKAAFIVGADITEFLSLFLVPEEQLSQWLHFANSVFNRLEDLPVPTLSAINGYALGGGCECVLATDYRLVTPDLRIGLPETKLGIMPGFGGSVRMPRMLGADSALEIIAAGKDIGAEQALKIGLVDGVVKPEKLLDGAIAVLRQAIDGSLDWKAKRQPKLEPLKLSKIEAAMSFTIAKGMVAQTAGKHYPAPMIAVKTIEAAARFGREEALNLENKSFVPLAHTNEARALVGIFLNDQFVKGKAKKLTKDVETPKQAAVLGAGIMGGGIAYQSAWKGVPVIMKDINDKSLTLGMTEAAKLLNKQLERGRIDGLKLAGVISTIHPTLNYAGFDRVDVVVEAVVENPKVKKAVLAETEDNVRPDTVLASNTSTIPISELASALKRPENFCGMHFFNPVHRMPLVEIIRGEKSSDETIAKVVAWASKMGKTPIVVNDCPGFFVNRVLFPYFAGFSQLLRDGADFRKVDKVMEKQFGWPMGPAYLLDVVGIDTAHHAQAVMAAGFPQRMQKDYRDAIDALFDASRYGQKNGLGFWRYKEDSKGKPKKEEDAAVDSLLAEVSQPKRDFSDEEIIARMMIPMVNEVVRCLEEGIIASPAEADMALVYGLGFPPFHGGAFRWLDTLGSAKYLDMAQQYQHLGPLYEVPEGLRNKARHNEPYYPPVEPARPVGDLKTA.

An enoyl-CoA hydratase/isomerase region spans residues 1-189; that stretch reads MLYKGDTLYL…KIGLVDGVVK (189 aa). Asp-296 serves as a coordination point for substrate. The interval 311–729 is 3-hydroxyacyl-CoA dehydrogenase; that stretch reads ETPKQAAVLG…ARPVGDLKTA (419 aa). NAD(+) contacts are provided by residues Met-324, Asp-343, 400–402, Lys-407, and Ser-429; that span reads VVE. Residue His-450 is the For 3-hydroxyacyl-CoA dehydrogenase activity of the active site. Asn-453 is an NAD(+) binding site. Substrate-binding residues include Asn-500 and Tyr-660. Residues 708 to 729 are disordered; that stretch reads RHNEPYYPPVEPARPVGDLKTA.

This sequence in the N-terminal section; belongs to the enoyl-CoA hydratase/isomerase family. In the C-terminal section; belongs to the 3-hydroxyacyl-CoA dehydrogenase family. Heterotetramer of two alpha chains (FadB) and two beta chains (FadA).

The enzyme catalyses a (3S)-3-hydroxyacyl-CoA + NAD(+) = a 3-oxoacyl-CoA + NADH + H(+). It catalyses the reaction a (3S)-3-hydroxyacyl-CoA = a (2E)-enoyl-CoA + H2O. The catalysed reaction is a 4-saturated-(3S)-3-hydroxyacyl-CoA = a (3E)-enoyl-CoA + H2O. It carries out the reaction (3S)-3-hydroxybutanoyl-CoA = (3R)-3-hydroxybutanoyl-CoA. The enzyme catalyses a (3Z)-enoyl-CoA = a 4-saturated (2E)-enoyl-CoA. It catalyses the reaction a (3E)-enoyl-CoA = a 4-saturated (2E)-enoyl-CoA. It participates in lipid metabolism; fatty acid beta-oxidation. In terms of biological role, involved in the aerobic and anaerobic degradation of long-chain fatty acids via beta-oxidation cycle. Catalyzes the formation of 3-oxoacyl-CoA from enoyl-CoA via L-3-hydroxyacyl-CoA. It can also use D-3-hydroxyacyl-CoA and cis-3-enoyl-CoA as substrate. This chain is Fatty acid oxidation complex subunit alpha, found in Citrobacter koseri (strain ATCC BAA-895 / CDC 4225-83 / SGSC4696).